The primary structure comprises 370 residues: MRGARAVIDLRAIGYNYNLIRELLDEKNPDAHILCILKANAYGHGAVEVAQFLAKYCSAEGFGVASIEEALELRLSGIQNRILLLEGFFTDEDELSLIDKYNFSITIHCEEQLKSFMNYPFKKPVEVHLKLDSGMNRLGFTPAEYADKYRLLKNHKNVSGIVKATHFAFADIPEKSEYTLKQWRIFEKAAGCLPDPLSAGGGVIVVGWLNTIHMDWLRTGSMLYGLDPYDLDAKAPELPKPLIPAMKLMSTIVCVKHVEKDQPIGYGGAYVTTRDSLIGVVAIGYGDGFPQVRNGCPVIINGKRVPTVGKVCMDMLAIDVTDVPDVKRGDDVVLWGNPELTIEEVSTFSNENPFEIITGLTRRVPLQYTF.

Catalysis depends on Lys38, which acts as the Proton acceptor; specific for D-alanine. At Lys38 the chain carries N6-(pyridoxal phosphate)lysine. Tyr266 serves as the catalytic Proton acceptor; specific for L-alanine.

Belongs to the alanine racemase family. Requires pyridoxal 5'-phosphate as cofactor.

The enzyme catalyses L-alanine = D-alanine. This chain is Putative alanine racemase 2 (alr2), found in Schizosaccharomyces pombe (strain 972 / ATCC 24843) (Fission yeast).